A 684-amino-acid polypeptide reads, in one-letter code: Threonine--tRNA ligase (684 aa).

The 60-residue stretch at 1-60 folds into the TGS domain; sequence MSISITLHRSGTSRTQQVDTTTTGLDLFGSDRAVVAMRVDGNLVDLQRELHDGAEVEPVE. Positions 256–567 are catalytic; sequence DHRKLGAELD…LTEHYAGAFP (312 aa). The Zn(2+) site is built by Cys-361, His-412, and His-544.

It belongs to the class-II aminoacyl-tRNA synthetase family. As to quaternary structure, homodimer. The cofactor is Zn(2+).

The protein localises to the cytoplasm. The catalysed reaction is tRNA(Thr) + L-threonine + ATP = L-threonyl-tRNA(Thr) + AMP + diphosphate + H(+). In terms of biological role, catalyzes the attachment of threonine to tRNA(Thr) in a two-step reaction: L-threonine is first activated by ATP to form Thr-AMP and then transferred to the acceptor end of tRNA(Thr). Also edits incorrectly charged L-seryl-tRNA(Thr). The chain is Threonine--tRNA ligase from Cutibacterium acnes (strain DSM 16379 / KPA171202) (Propionibacterium acnes).